The following is an 865-amino-acid chain: Protein translocase subunit SecA (865 aa).

ATP is bound by residues Q85, 103 to 107, and D505; that span reads GEGKT. 4 residues coordinate Zn(2+): C847, C849, C858, and H859.

This sequence belongs to the SecA family. Monomer and homodimer. Part of the essential Sec protein translocation apparatus which comprises SecA, SecYEG and auxiliary proteins SecDF. Other proteins may also be involved. Zn(2+) is required as a cofactor.

The protein resides in the cell membrane. Its subcellular location is the cytoplasm. It carries out the reaction ATP + H2O + cellular proteinSide 1 = ADP + phosphate + cellular proteinSide 2.. Its function is as follows. Part of the Sec protein translocase complex. Interacts with the SecYEG preprotein conducting channel. Has a central role in coupling the hydrolysis of ATP to the transfer of proteins into and across the cell membrane, serving as an ATP-driven molecular motor driving the stepwise translocation of polypeptide chains across the membrane. The sequence is that of Protein translocase subunit SecA from Lactococcus lactis subsp. cremoris (strain MG1363).